A 994-amino-acid polypeptide reads, in one-letter code: Receptor-like protein 6 (994 aa).

The N-terminal stretch at Met-1–Cys-25 is a signal peptide. The Extracellular segment spans residues Asn-26 to Glu-946. N-linked (GlcNAc...) asparagine glycosylation is found at Asn-116, Asn-134, and Asn-154. LRR repeat units lie at residues Leu-122–Lys-146, Met-148–Leu-171, Leu-174–His-199, Phe-205–Tyr-228, Trp-230–Ile-253, Pro-254–Asn-278, Leu-280–Leu-301, Lys-302–Leu-325, Ser-326–Leu-349, Lys-350–Leu-373, Gln-375–Leu-397, Ser-398–Ile-421, Ser-423–Leu-445, Leu-446–Ser-471, Ser-477–Ser-497, Ser-498–Gln-520, Arg-521–Leu-544, Glu-546–Gly-569, and Lys-571–Tyr-595. Asn-277 and Asn-287 each carry an N-linked (GlcNAc...) asparagine glycan. Asn-420, Asn-435, and Asn-442 each carry an N-linked (GlcNAc...) asparagine glycan. Residue Asn-489 is glycosylated (N-linked (GlcNAc...) asparagine). Residues Asn-522, Asn-554, and Asn-561 are each glycosylated (N-linked (GlcNAc...) asparagine). The LRR 20; degenerate repeat unit spans residues Leu-597–Gly-613. N-linked (GlcNAc...) asparagine glycosylation is present at Asn-602. LRR repeat units follow at residues Leu-614–Ala-637, Met-639–Ala-663, Val-665–Cys-687, Ala-689–Ser-710, Leu-711–Gly-737, Pro-739–Asn-762, Leu-803–Leu-827, Lys-828–Leu-851, Thr-852–Leu-875, and Ser-877–Arg-900. An N-linked (GlcNAc...) asparagine glycan is attached at Asn-649. A glycan (N-linked (GlcNAc...) asparagine) is linked at Asn-701. N-linked (GlcNAc...) asparagine glycosylation is present at Asn-762. Asn-834 and Asn-850 each carry an N-linked (GlcNAc...) asparagine glycan. Residues Asn-882 and Asn-902 are each glycosylated (N-linked (GlcNAc...) asparagine). Residues Leu-947–Met-967 traverse the membrane as a helical segment. The Cytoplasmic segment spans residues Gly-968–Arg-994.

The protein belongs to the RLP family.

It is found in the cell membrane. The chain is Receptor-like protein 6 from Arabidopsis thaliana (Mouse-ear cress).